Consider the following 268-residue polypeptide: Ubiquinone biosynthesis protein COQ4 homolog, mitochondrial (268 aa).

Residues His-171, Asp-172, His-175, and Glu-187 each coordinate Zn(2+).

It belongs to the COQ4 family. Component of a multi-subunit COQ enzyme complex. Zn(2+) is required as a cofactor.

It localises to the mitochondrion inner membrane. It carries out the reaction a 4-hydroxy-3-methoxy-5-(all-trans-polyprenyl)benzoate + H(+) = a 2-methoxy-6-(all-trans-polyprenyl)phenol + CO2. It functions in the pathway cofactor biosynthesis; ubiquinone biosynthesis. Lyase that catalyzes the C1-decarboxylation of 4-hydroxy-3-methoxy-5-(all-trans-polyprenyl)benzoic acid into 2-methoxy-6-(all-trans-polyprenyl)phenol during ubiquinone biosynthesis. The protein is Ubiquinone biosynthesis protein COQ4 homolog, mitochondrial of Drosophila erecta (Fruit fly).